The sequence spans 221 residues: MAKNKFNQSWLHDHINDPYVKLAQREGYRARAAYKLKEIDEQDKLIKPGQVIVDLGAAPGSWSQYVRNKLAASPRAKDGRIDGAIVAIDILPMEPVADVTFIQGDFREESVFQQLETIVLDATGGGKVDLVLSDMAPNLSGVASADAARMEHIAELAVEFAQAHLKPEGALLIKCFHGSGYSQIVEMFKRHFRVVAPRKPKASRDKSSETFLLGRQLKHPG.

G60, W62, D89, D105, and D134 together coordinate S-adenosyl-L-methionine. K174 functions as the Proton acceptor in the catalytic mechanism. Positions 199–221 (KPKASRDKSSETFLLGRQLKHPG) are disordered.

The protein belongs to the class I-like SAM-binding methyltransferase superfamily. RNA methyltransferase RlmE family.

It localises to the cytoplasm. It carries out the reaction uridine(2552) in 23S rRNA + S-adenosyl-L-methionine = 2'-O-methyluridine(2552) in 23S rRNA + S-adenosyl-L-homocysteine + H(+). Specifically methylates the uridine in position 2552 of 23S rRNA at the 2'-O position of the ribose in the fully assembled 50S ribosomal subunit. The sequence is that of Ribosomal RNA large subunit methyltransferase E from Ralstonia nicotianae (strain ATCC BAA-1114 / GMI1000) (Ralstonia solanacearum).